Here is a 231-residue protein sequence, read N- to C-terminus: Large ribosomal subunit protein uL1 (231 aa).

This sequence belongs to the universal ribosomal protein uL1 family. In terms of assembly, part of the 50S ribosomal subunit.

Functionally, binds directly to 23S rRNA. The L1 stalk is quite mobile in the ribosome, and is involved in E site tRNA release. In terms of biological role, protein L1 is also a translational repressor protein, it controls the translation of the L11 operon by binding to its mRNA. The sequence is that of Large ribosomal subunit protein uL1 from Azotobacter vinelandii (strain DJ / ATCC BAA-1303).